The chain runs to 354 residues: MNTRRELPESPYLAAAAGRKPHRVPVWMMRQAGRSLPEYRELRAKNTMMQACFDADLITEITLQPVRRHGVDAAILFSDIVVPLRAAGIDLDIVPDVGPVIAHPIRTAADVATVSPLRRETVAPVATAIGQLTAALGDVALIGFAGAPFTLASYLIEGGPSRNHERTKAMMLGETETWNALMAALTDVTIEFLRVQLDAGVDAIQVFDSWAGTLSLADYRAYVLPHSARVFEALAGYGVPMTHFGVGTAELLGAMSEAVSGHGVPAVVGVDWRTSLTDAAARVRPGCALQGNLDPVVLLAGWPVVERAVRAVVEDGRRAVDAGATGHVFNLGHGVLPATDPAIITDAVALVHQL.

Residues 30 to 34 (RQAGR), D79, Y154, S209, and H333 contribute to the substrate site.

The protein belongs to the uroporphyrinogen decarboxylase family. Homodimer.

The protein resides in the cytoplasm. It catalyses the reaction uroporphyrinogen III + 4 H(+) = coproporphyrinogen III + 4 CO2. Its pathway is porphyrin-containing compound metabolism; protoporphyrin-IX biosynthesis; coproporphyrinogen-III from 5-aminolevulinate: step 4/4. Its function is as follows. Catalyzes the decarboxylation of four acetate groups of uroporphyrinogen-III to yield coproporphyrinogen-III. This is Uroporphyrinogen decarboxylase from Mycolicibacterium gilvum (strain PYR-GCK) (Mycobacterium gilvum (strain PYR-GCK)).